The primary structure comprises 449 residues: UDP-N-acetylmuramoylalanine--D-glutamate ligase (449 aa).

117–123 lines the ATP pocket; it reads GSNGKTT.

It belongs to the MurCDEF family.

Its subcellular location is the cytoplasm. The enzyme catalyses UDP-N-acetyl-alpha-D-muramoyl-L-alanine + D-glutamate + ATP = UDP-N-acetyl-alpha-D-muramoyl-L-alanyl-D-glutamate + ADP + phosphate + H(+). Its pathway is cell wall biogenesis; peptidoglycan biosynthesis. Functionally, cell wall formation. Catalyzes the addition of glutamate to the nucleotide precursor UDP-N-acetylmuramoyl-L-alanine (UMA). This is UDP-N-acetylmuramoylalanine--D-glutamate ligase from Exiguobacterium sibiricum (strain DSM 17290 / CCUG 55495 / CIP 109462 / JCM 13490 / 255-15).